A 104-amino-acid polypeptide reads, in one-letter code: Iron-sulfur cluster assembly protein CyaY (104 aa).

Belongs to the frataxin family.

Its function is as follows. Involved in iron-sulfur (Fe-S) cluster assembly. May act as a regulator of Fe-S biogenesis. The protein is Iron-sulfur cluster assembly protein CyaY of Aeromonas hydrophila subsp. hydrophila (strain ATCC 7966 / DSM 30187 / BCRC 13018 / CCUG 14551 / JCM 1027 / KCTC 2358 / NCIMB 9240 / NCTC 8049).